We begin with the raw amino-acid sequence, 311 residues long: MFIVTGGAGFIGSSIVKSLNERGITDILVVDDLTDGAKFVNLVDLQIMDYMDKDEFITQIVSGQDFGDIEAIFHEGACSATTEWNGKFMMENNYEYSKDLLHYCIERDIPFLYASSAATYGGNDTFKEELKYEKPLNVYGYSKFQFDQYVRRIWEDAAAHDETLPQIVGFRYFNVYGPREQHKGSMASVAFHLNNQLNAGENAKLFEGEHKRDFVYIGDVCKVNLWFFDNNVSGIYNLGTGQAESFLEVGQAVVAYHQKGEVERIPFPEHLKGRYQSFTEADLTNLRAAGYKDTFKSVAQGTAEYMAWLNR.

NADP(+)-binding positions include 10-11 (FI), 31-32 (DD), K38, K53, 75-79 (EGACS), and N92. Y139 (proton acceptor) is an active-site residue. K143 is an NADP(+) binding site. N174 is a substrate binding site. NADP(+) is bound by residues V175 and K183. The active-site Proton acceptor is K183. Residues S185, H192, 206-209 (FEGE), R212, and Y275 each bind substrate.

It belongs to the NAD(P)-dependent epimerase/dehydratase family. HldD subfamily. As to quaternary structure, homopentamer. Requires NADP(+) as cofactor.

It catalyses the reaction ADP-D-glycero-beta-D-manno-heptose = ADP-L-glycero-beta-D-manno-heptose. It functions in the pathway nucleotide-sugar biosynthesis; ADP-L-glycero-beta-D-manno-heptose biosynthesis; ADP-L-glycero-beta-D-manno-heptose from D-glycero-beta-D-manno-heptose 7-phosphate: step 4/4. Catalyzes the interconversion between ADP-D-glycero-beta-D-manno-heptose and ADP-L-glycero-beta-D-manno-heptose via an epimerization at carbon 6 of the heptose. The polypeptide is ADP-L-glycero-D-manno-heptose-6-epimerase (Psychromonas ingrahamii (strain DSM 17664 / CCUG 51855 / 37)).